Consider the following 427-residue polypeptide: Ribosome biogenesis protein WDR12 homolog (427 aa).

Residues 13–97 are ubiquitin-like (UBL) domain; that stretch reads LQLHLYTKQK…EDTVELEYVE (85 aa). WD repeat units follow at residues 109–146, 148–190, 197–236, 260–298, 301–339, 345–385, and 389–427; these read LHDD…KLTI, GHIA…NSVE, GHER…DGDS, GHRE…IKSE, GHKS…GTIV, GHTQ…APIF, and GHED…GEQK.

It belongs to the WD repeat WDR12/YTM1 family.

It is found in the nucleus. It localises to the nucleolus. The protein localises to the nucleoplasm. In terms of biological role, required for maturation of ribosomal RNAs and formation of the large ribosomal subunit. This Aedes aegypti (Yellowfever mosquito) protein is Ribosome biogenesis protein WDR12 homolog.